We begin with the raw amino-acid sequence, 307 residues long: Ribosomal protein L11 methyltransferase (307 aa).

Thr-154, Gly-178, Asp-200, and Asn-242 together coordinate S-adenosyl-L-methionine.

Belongs to the methyltransferase superfamily. PrmA family.

It localises to the cytoplasm. It catalyses the reaction L-lysyl-[protein] + 3 S-adenosyl-L-methionine = N(6),N(6),N(6)-trimethyl-L-lysyl-[protein] + 3 S-adenosyl-L-homocysteine + 3 H(+). Methylates ribosomal protein L11. The protein is Ribosomal protein L11 methyltransferase of Syntrophotalea carbinolica (strain DSM 2380 / NBRC 103641 / GraBd1) (Pelobacter carbinolicus).